We begin with the raw amino-acid sequence, 207 residues long: Interleukin-6 (207 aa).

An N-terminal signal peptide occupies residues 1–18 (MKFFSIASLGLLLVVATA). The tract at residues 26-47 (REDGENSVTRNKPTRASSGKTR) is disordered. Residues 31-44 (NSVTRNKPTRASSG) show a composition bias toward polar residues. The cysteines at positions 65 and 71 are disulfide-linked. Ser-74 carries the post-translational modification Phosphoserine. Cys-94 and Cys-104 are disulfide-bonded.

Belongs to the IL-6 superfamily. As to quaternary structure, component of a hexamer of two molecules each of IL6, IL6R and IL6ST; first binds to IL6R to associate with the signaling subunit IL6ST. Interacts with IL6R (via the N-terminal ectodomain); this interaction may be affected by IL6R-binding with SORL1, hence decreasing IL6 cis signaling. Interacts with SORL1 (via the N-terminal ectodomain); this interaction leads to IL6 internalization and lysosomal degradation. May form a trimeric complex with the soluble SORL1 ectodomain and soluble IL6R receptor; this interaction might stabilize circulating IL6, hence promoting IL6 trans signaling.

The protein localises to the secreted. Functionally, cytokine with a wide variety of biological functions in immunity, tissue regeneration, and metabolism. Binds to IL6R, then the complex associates to the signaling subunit IL6ST/gp130 to trigger the intracellular IL6-signaling pathway. The interaction with the membrane-bound IL6R and IL6ST stimulates 'classic signaling', whereas the binding of IL6 and soluble IL6R to IL6ST stimulates 'trans-signaling'. Alternatively, 'cluster signaling' occurs when membrane-bound IL6:IL6R complexes on transmitter cells activate IL6ST receptors on neighboring receiver cells. Its function is as follows. IL6 is a potent inducer of the acute phase response. Rapid production of IL6 contributes to host defense during infection and tissue injury, but excessive IL6 synthesis is involved in disease pathology. In the innate immune response, is synthesized by myeloid cells, such as macrophages and dendritic cells, upon recognition of pathogens through toll-like receptors (TLRs) at the site of infection or tissue injury. In the adaptive immune response, is required for the differentiation of B cells into immunoglobulin-secreting cells. Plays a major role in the differentiation of CD4(+) T cell subsets. Essential factor for the development of T follicular helper (Tfh) cells that are required for the induction of germinal-center formation. Required to drive naive CD4(+) T cells to the Th17 lineage. Also required for proliferation of myeloma cells and the survival of plasmablast cells. In terms of biological role, acts as an essential factor in bone homeostasis and on vessels directly or indirectly by induction of VEGF, resulting in increased angiogenesis activity and vascular permeability. Induces, through 'trans-signaling' and synergistically with IL1B and TNF, the production of VEGF. Involved in metabolic controls, is discharged into the bloodstream after muscle contraction increasing lipolysis and improving insulin resistance. 'Trans-signaling' in central nervous system also regulates energy and glucose homeostasis. Mediates, through GLP-1, crosstalk between insulin-sensitive tissues, intestinal L cells and pancreatic islets to adapt to changes in insulin demand. Also acts as a myokine. Plays a protective role during liver injury, being required for maintenance of tissue regeneration. Also has a pivotal role in iron metabolism by regulating HAMP/hepcidin expression upon inflammation or bacterial infection. Through activation of IL6ST-YAP-NOTCH pathway, induces inflammation-induced epithelial regeneration. The chain is Interleukin-6 (IL6) from Marmota monax (Woodchuck).